Reading from the N-terminus, the 263-residue chain is uncharacterized protein (263 aa).

Residue 16 to 23 (AKGGTGKT) participates in ATP binding.

The protein to M.jannaschii MJ0547 and MJ0169.

This is an uncharacterized protein from Methanocaldococcus jannaschii (strain ATCC 43067 / DSM 2661 / JAL-1 / JCM 10045 / NBRC 100440) (Methanococcus jannaschii).